A 235-amino-acid chain; its full sequence is KNMITGAAQMDGAILVVSAADGPMPQTREHILLSKQVGVPHIVVFLNKEDQVDDLELVELVELEVRELLSNYDFPGDDIPILTGSALQALDAINNEPTLKKGDNKWVDKIYSLMESVDSYIPTPIRDVDKPFLMAIEDVFSITGRGTVATGKIDRGIVKVGETVDLVGLGDTKSTTVTGVEMFQKTLDEGVAGDNVGILLRGLQKGDIERGMVLSKPGTITPHNTFESELYILTK.

A tr-type G domain is found at 1 to 125 (KNMITGAAQM…SVDSYIPTPI (125 aa)). GTP is bound at residue 47–50 (NKED).

This sequence belongs to the TRAFAC class translation factor GTPase superfamily. Classic translation factor GTPase family. EF-Tu/EF-1A subfamily.

It localises to the plastid. The protein localises to the chloroplast. The enzyme catalyses GTP + H2O = GDP + phosphate + H(+). Functionally, GTP hydrolase that promotes the GTP-dependent binding of aminoacyl-tRNA to the A-site of ribosomes during protein biosynthesis. In Costaria costata (Five-ribbed kelp), this protein is Elongation factor Tu, chloroplastic (tufA).